The primary structure comprises 356 residues: CMP-sialic acid transporter 2 (356 aa).

Residues 1-24 (MEYRRVKDQESYDVVSQKDIESPG) show a composition bias toward basic and acidic residues. Positions 1–43 (MEYRRVKDQESYDVVSQKDIESPGERSLSSTSATSSLSTAGAS) are disordered. Over 1-52 (MEYRRVKDQESYDVVSQKDIESPGERSLSSTSATSSLSTAGASKGNNSWKLK) the chain is Cytoplasmic. Residues 27–43 (SLSSTSATSSLSTAGAS) show a composition bias toward low complexity. The chain crosses the membrane as a helical span at residues 53 to 73 (SIVTLALTLLTSSQAILIVWS). Topologically, residues 74 to 82 (KRAGKYEYS) are lumenal. A helical transmembrane segment spans residues 83 to 103 (VTTANFSVEALKCLLSLIALY). Over 104 to 125 (RTWNSQGVTEDNRLSTSFDEVS) the chain is Cytoplasmic. The chain crosses the membrane as a helical span at residues 126-146 (VYPIPAILYMVKNLLQYYIFA). Residues 147–149 (YVD) lie on the Lumenal side of the membrane. Residues 150–172 (APAYQILKNLNIISTGVLYRIIL) form a helical membrane-spanning segment. At 173-175 (KKK) the chain is on the cytoplasmic side. The helical transmembrane segment at 176-196 (LSEIQWAAFILLCAGCTTAQL) threads the bilayer. Residues 197–211 (NPSSDHVLQTPIQGW) lie on the Lumenal side of the membrane. The helical transmembrane segment at 212 to 232 (VMAIVMALLSGFAGVYTEAII) threads the bilayer. The Cytoplasmic segment spans residues 233–239 (KKRPSRN). Residues 240 to 260 (INVQNFWLYIFGMLFNLVAIC) form a helical membrane-spanning segment. Topologically, residues 261–277 (VQDFDAVMNKGFFHGYS) are lumenal. The helical transmembrane segment at 278–298 (FITVLMILNHALSGIAVSMVM) threads the bilayer. At 299–314 (KYADNIVKVYSTSVAM) the chain is on the cytoplasmic side. A helical membrane pass occupies residues 315–335 (LLTAVVSVFLFGFHLSLAFFL). The Lumenal segment spans residues 336–356 (GSTVVSVSVYLHSVGKPQPQK).

The protein belongs to the nucleotide-sugar transporter family. CMP-Sialate:CMP antiporter (TC 2.A.7.12) subfamily.

It is found in the golgi apparatus membrane. Its function is as follows. Sugar transporter involved in the transport of CMP-sialic acid from the cytoplasm into the Golgi. May transport important nucleotide sugars such as CMP-Kdo (2-keto-3-deoxy-D-manno-octulosonic acid) in physiological conditions. In Oryza sativa subsp. indica (Rice), this protein is CMP-sialic acid transporter 2.